A 232-amino-acid polypeptide reads, in one-letter code: NKG2-D type II integral membrane protein (232 aa).

Topologically, residues 1–66 (MALIRDRKSH…IEKLKISPMF (66 aa)) are cytoplasmic. Residues 67-89 (VVRVLAIALAIRFTLNTLMWLAI) form a helical; Signal-anchor for type II membrane protein membrane-spanning segment. Residues 90–232 (FKETFQPVLC…NTYICMKRAV (143 aa)) are Extracellular-facing. Intrachain disulfides connect Cys-112–Cys-121 and Cys-115–Cys-126. The C-type lectin domain maps to 122-228 (HRNNCYQFFN…CANLNTYICM (107 aa)). Residues Asn-137, Asn-147, and Asn-179 are each glycosylated (N-linked (GlcNAc...) asparagine). Cystine bridges form between Cys-143-Cys-227 and Cys-205-Cys-219.

Homodimer; disulfide-linked. Heterohexamer composed of two subunits of KLRK1 and four subunits of HCST/DAP10. Isoform 1 (via transmembrane domain) interacts with HCST/DAP10; the interaction is required for KLRK1 cell surface expression on activated CD8(+) T-cells, but is dispensable on activated TYROBP-expressing NK cells. Isoform 2 (via transmembrane domain) interacts with HCST/DAP10 (via transmembrane domain); the interaction is required for KLRK1 NK cell surface expression and induces NK cell-mediated cytotoxicity. Isoform 2 (via transmembrane domain) interacts with TYROBP (via transmembrane domain); the interaction is required for KLRK1 NK cell surface expression and induce NK cell-mediated cytotoxicity and cytokine secretion. Isoform 1 does not interact with TYROBP. Interacts with CEACAM1; recruits PTPN6 that dephosphorylates VAV1. As to expression, expressed in natural killer (NK) cells, activated CD8(+) alpha-beta and gamma-delta T-cells and natural killer T (NKT) cells (at protein level). May be expressed on dendritic cell (DC). Isoform 1 is strongly expressed in natural killer (NK) cells. Isoform 2 is weakly expressed in natural killer (NK) cells. Isoform 1 and isoform 2 are expressed in stimulated, but not in unstimulated, CD8(+) T-cells and macrophages.

It localises to the cell membrane. Its function is as follows. Functions as an activating and costimulatory receptor involved in immunosurveillance upon binding to various cellular stress-inducible ligands displayed at the surface of autologous tumor cells and virus-infected cells. Provides both stimulatory and costimulatory innate immune responses on activated killer (NK) cells, leading to cytotoxic activity. Acts as a costimulatory receptor for T-cell receptor (TCR) in CD8(+) T-cell-mediated adaptive immune responses by amplifying T-cell activation. Stimulates perforin-mediated elimination of ligand-expressing tumor cells. Signaling involves calcium influx, culminating in the expression of TNF-alpha. Participates in NK cell-mediated bone marrow graft rejection. May play a regulatory role in differentiation and survival of NK cells. Binds to ligands belonging to various subfamilies of MHC class I-related glycoproteins including RAET1A, RAET1B, RAET1C, RAET1D, RAET1E, H60 and MULT1. The chain is NKG2-D type II integral membrane protein (Klrk1) from Mus musculus (Mouse).